The primary structure comprises 668 residues: Spartin (668 aa).

N-acetylmethionine is present on M1. The region spanning 16-94 is the MIT domain; sequence IKEAYKKAFV…LQNVRTRLEI (79 aa). A disordered region spans residues 110–176; that stretch reads VPKLYPEFPP…PSEAPPAYTP (67 aa). Over residues 118-127 the composition is skewed to basic and acidic residues; it reads PPKDMSEKSP. At S126 the chain carries Phosphoserine. Residues 128–162 show a composition bias toward low complexity; that stretch reads EPQSLSSLPQHSEVNGSTSTASAESSSTPTTLSLP. Residues 190–380 form a ubiquitin-binding region (UBR) domain region; that stretch reads ESGEFSSVGE…QLDPSSKDVR (191 aa). Residues 193–200 carry the LC3-interacting region (LIR); mediates interaction with MAP1LC3A AND MAP1LC3C motif; the sequence is EFSSVGEN. A disordered region spans residues 348–396; sequence FQIPGISGSASDQLKEASGTDVRQLDPSSKDVRQKGKRGKKTKGTSSEE. K362 participates in a covalent cross-link: Glycyl lysine isopeptide (Lys-Gly) (interchain with G-Cter in ubiquitin). The region spanning 427–611 is the Senescence domain; sequence ILSGASWVSW…YNIDNIGIKA (185 aa). The required for localization to lipid droplets stretch occupies residues 431–503; that stretch reads ASWVSWGLVK…LVDGVCTVAN (73 aa). Phosphoserine is present on S470. Positions 631–668 are disordered; the sequence is IDNSKGENPGGGASANLKGEKDEQKEGPEKNGAKKKDK. A compositionally biased stretch (basic and acidic residues) spans 648 to 668; that stretch reads KGEKDEQKEGPEKNGAKKKDK.

In terms of assembly, interacts with ITCH and WWP1. Interacts (via MIT domain) with IST1; leading to the recruitment of SPART to midbodies. Interacts with MAP1LC3A and MAP1LC3C. Post-translationally, ubiquitinated; ubiquitination does not require ITCH and WWP1.

Its subcellular location is the cytoplasm. It localises to the midbody. The protein localises to the lipid droplet. Functionally, lipophagy receptor that plays an important role in lipid droplet (LD) turnover in motor neurons. Localizes to LDs and interacts with components of the autophagy machinery, such as MAP1LC3A/C proteins to deliver LDs to autophagosomes for degradation via lipophagy. Lipid transfer protein required for lipid droplet degradation, including by lipophagy. Can bind and transfer all lipid species found in lipid droplets, from phospholipids to triglycerides and sterol esters but the direction of lipid transfer by spartin and its cargos are unknown. May be implicated in endosomal trafficking, or microtubule dynamics, or both. Participates in cytokinesis. The sequence is that of Spartin from Bos taurus (Bovine).